Here is a 473-residue protein sequence, read N- to C-terminus: Adenosylhomocysteinase (473 aa).

Positions 64, 139, and 199 each coordinate substrate. 200 to 202 (TTT) contacts NAD(+). K229 and D233 together coordinate substrate. NAD(+) is bound by residues N234, 263 to 268 (GYGDVG), E286, N321, 342 to 344 (IGH), and N387.

The protein belongs to the adenosylhomocysteinase family. It depends on NAD(+) as a cofactor.

The protein localises to the cytoplasm. It catalyses the reaction S-adenosyl-L-homocysteine + H2O = L-homocysteine + adenosine. It participates in amino-acid biosynthesis; L-homocysteine biosynthesis; L-homocysteine from S-adenosyl-L-homocysteine: step 1/1. Functionally, may play a key role in the regulation of the intracellular concentration of adenosylhomocysteine. The chain is Adenosylhomocysteinase from Burkholderia thailandensis (strain ATCC 700388 / DSM 13276 / CCUG 48851 / CIP 106301 / E264).